The chain runs to 260 residues: Putative ABC transporter substrate-binding lipoprotein YvgL (260 aa).

The N-terminal stretch at 1 to 20 is a signal peptide; the sequence is MFKKYSIFIAALTAFLLVAG. C21 carries the N-palmitoyl cysteine lipid modification. C21 carries S-diacylglycerol cysteine lipidation. Molybdate is bound by residues S43, S71, A151, V178, and Y196.

Belongs to the bacterial solute-binding protein ModA family.

It is found in the cell membrane. The protein is Putative ABC transporter substrate-binding lipoprotein YvgL (yvgL) of Bacillus subtilis (strain 168).